The primary structure comprises 244 residues: MAASARPVGVGGERATSFAMACSLLSRYVRQNGAAAAELGLGIRGEGEAPRAAPATMSLLPGEAERKKETMELFPQSAGFGQQDAITADSAADAREQEPEKRQLTIFYGGKVLVFNDFPADKAKGLMQLASKGSPVAPQNAAAPAPAAVTDNTKAPMAVPAPVSSLPTAQADAQKPARANASDMPIARKASLHRFLEKRKDRLNAKTPYQASPSDATPVKKEPESQPWLGLGPNAVVKPIERGQ.

Residues 97–132 (QEPEKRQLTIFYGGKVLVFNDFPADKAKGLMQLASK) enclose the Tify domain. The segment at 174–244 (QKPARANASD…AVVKPIERGQ (71 aa)) is disordered. Positions 185-210 (PIARKASLHRFLEKRKDRLNAKTPYQ) match the Jas motif. Positions 187-194 (ARKASLHR) match the Nuclear localization signal motif. The segment covering 194–204 (RFLEKRKDRLN) has biased composition (basic and acidic residues).

This sequence belongs to the TIFY/JAZ family. Interacts with BHLH148. Interacts with COI1A and COI1B in a coronatine-dependent manner. Coronatine is an analog of jasmonoyl isoleucine (JA-Ile). In terms of processing, ubiquitinated. Targeted for degradation by the SCF(COI1) E3 ubiquitin ligase-proteasome pathway during jasmonate signaling.

It localises to the nucleus. Its function is as follows. Repressor of jasmonate responses. This Oryza sativa subsp. japonica (Rice) protein is Protein TIFY 10b.